A 224-amino-acid polypeptide reads, in one-letter code: Urease accessory protein UreF (224 aa).

This sequence belongs to the UreF family. UreD, UreF and UreG form a complex that acts as a GTP-hydrolysis-dependent molecular chaperone, activating the urease apoprotein by helping to assemble the nickel containing metallocenter of UreC. The UreE protein probably delivers the nickel.

Its subcellular location is the cytoplasm. Functionally, required for maturation of urease via the functional incorporation of the urease nickel metallocenter. This is Urease accessory protein UreF from Enterobacter sp. (strain 638).